The primary structure comprises 379 residues: Guanine nucleotide-binding protein G(s) subunit alpha (379 aa).

The G-alpha domain occupies 38-379 (STHRLLLLGA…RMHLRQYELL (342 aa)). The interval 41 to 54 (RLLLLGAGESGKST) is G1 motif. Residues 46–53 (GAGESGKS), 182–188 (LRCRVLT), 207–211 (DVGGQ), 276–279 (NKQD), and Ala-351 each bind GTP. Mg(2+) contacts are provided by Ser-53 and Thr-188. Residues 180–188 (DILRCRVLT) are G2 motif. The segment at 203 to 212 (FHMFDVGGQR) is G3 motif. Residues 272–279 (ILFLNKQD) form a G4 motif region. Positions 349-354 (TCAVDT) are G5 motif.

This sequence belongs to the G-alpha family. G(s) subfamily. In terms of assembly, g proteins are composed of 3 units; alpha, beta and gamma. The alpha chain contains the guanine nucleotide binding site.

Guanine nucleotide-binding proteins (G proteins) are involved as modulators or transducers in various transmembrane signaling systems. The G(s) protein is involved in hormonal regulation of adenylate cyclase: it activates the cyclase in response to beta-adrenergic stimuli. In Schistosoma mansoni (Blood fluke), this protein is Guanine nucleotide-binding protein G(s) subunit alpha.